Here is a 156-residue protein sequence, read N- to C-terminus: Small ribosomal subunit protein uS7 (156 aa).

It belongs to the universal ribosomal protein uS7 family. In terms of assembly, part of the 30S ribosomal subunit. Contacts proteins S9 and S11.

Its function is as follows. One of the primary rRNA binding proteins, it binds directly to 16S rRNA where it nucleates assembly of the head domain of the 30S subunit. Is located at the subunit interface close to the decoding center, probably blocks exit of the E-site tRNA. This chain is Small ribosomal subunit protein uS7, found in Heliobacterium modesticaldum (strain ATCC 51547 / Ice1).